A 123-amino-acid chain; its full sequence is Histone H2B (123 aa).

Residues 1–32 are disordered; the sequence is MAPKAPGKGAKKAAKSKAPRAPGDRKRKRTRR. A compositionally biased stretch (basic residues) spans 9 to 18; sequence GAKKAAKSKA. The O-linked (GlcNAc) serine glycan is linked to Ser-110. Lys-118 participates in a covalent cross-link: Glycyl lysine isopeptide (Lys-Gly) (interchain with G-Cter in ubiquitin).

It belongs to the histone H2B family. In terms of assembly, the nucleosome is a histone octamer containing two molecules each of H2A, H2B, H3 and H4 assembled in one H3-H4 heterotetramer and two H2A-H2B heterodimers. The octamer wraps approximately 147 bp of DNA. In terms of processing, monoubiquitination of Lys-118 gives a specific tag for epigenetic transcriptional activation and is also prerequisite for histone H3 'Lys-4' and 'Lys-79' methylation. GlcNAcylation at Ser-110 promotes monoubiquitination of Lys-118. It fluctuates in response to extracellular glucose, and associates with transcribed genes.

It localises to the nucleus. Its subcellular location is the chromosome. In terms of biological role, core component of nucleosome. Nucleosomes wrap and compact DNA into chromatin, limiting DNA accessibility to the cellular machineries which require DNA as a template. Histones thereby play a central role in transcription regulation, DNA repair, DNA replication and chromosomal stability. DNA accessibility is regulated via a complex set of post-translational modifications of histones, also called histone code, and nucleosome remodeling. This chain is Histone H2B, found in Holothuria tubulosa (Tubular sea cucumber).